Reading from the N-terminus, the 3433-residue chain is Genome polyprotein (3433 aa).

An interaction with host EXOC1 region spans residues 2 to 15 (SKKPGGPGKSRAVN). Residues 2–105 (SKKPGGPGKS…NRRSSKQKKR (104 aa)) are Cytoplasmic-facing. The interval 37 to 72 (LIDGRGPTRFVLALLAFFRFTAIAPTRAVLDRWRSV) is hydrophobic; homodimerization of capsid protein C. A propeptide spans 106–123 (GGKTGIAFMIGLIAGVGA) (ER anchor for the capsid protein C, removed in mature form by serine protease NS3). Residues 106–126 (GGKTGIAFMIGLIAGVGAVTL) traverse the membrane as a helical segment. The Extracellular segment spans residues 127 to 248 (SNFQGKVMMT…KATRYLVKTE (122 aa)). A glycan (N-linked (GlcNAc...) asparagine; by host) is linked at Asn-138. Residues 249 to 269 (SWILRNPGYALVAAVIGWMLG) traverse the membrane as a helical segment. Over 270–273 (SNTM) the chain is Cytoplasmic. A helical membrane pass occupies residues 274-290 (QRVVFAVLLLLVAPAYS). Over 291 to 743 (FNCLGMSNRD…QVFGGAFRSL (453 aa)) the chain is Extracellular. 4 disulfide bridges follow: Cys-293–Cys-320, Cys-350–Cys-406, Cys-364–Cys-395, and Cys-382–Cys-411. The segment at 388-401 (DRGWGNGCGLFGKG) is fusion peptide. N-linked (GlcNAc...) asparagine; by host glycosylation occurs at Asn-444. Intrachain disulfides connect Cys-480–Cys-578 and Cys-595–Cys-626. A helical transmembrane segment spans residues 744–764 (FGGMSWITQGLLGALLLWMGI). Topologically, residues 765 to 770 (NARDRS) are cytoplasmic. Residues 771-791 (IALTFLAVGGVLLFLSVNVHA) traverse the membrane as a helical segment. Residues 792–1216 (DTGCAIDISR…AFAESNSGGD (425 aa)) lie on the Extracellular side of the membrane. Intrachain disulfides connect Cys-795/Cys-806 and Cys-846/Cys-934. N-linked (GlcNAc...) asparagine; by host glycosylation is found at Asn-921, Asn-966, and Asn-998. 4 disulfides stabilise this stretch: Cys-970–Cys-1014, Cys-1071–Cys-1120, Cys-1082–Cys-1103, and Cys-1104–Cys-1107. The helical transmembrane segment at 1217-1237 (VVHLALMATFKIQPVFMVASF) threads the bilayer. Residues 1238 to 1247 (LKARWTNQEN) lie on the Cytoplasmic side of the membrane. Residues 1248 to 1268 (ILLMLAAAFFQMAYYDARQIL) traverse the membrane as a helical segment. Residues 1269-1288 (LWEMPDVLNSLAVAWMILRA) are Lumenal-facing. The chain crosses the membrane as a helical span at residues 1289 to 1309 (ITFTTTSNVVVPLLALLTPGL). Residues 1310–1316 (RCLNLDV) lie on the Cytoplasmic side of the membrane. The chain crosses the membrane as a helical span at residues 1317–1335 (YRILLLMVGIGSLIREKRS). Topologically, residues 1336–1345 (AAAKKKGASL) are lumenal. A helical transmembrane segment spans residues 1346-1366 (LCLALASTGFFNPMILAAGLV). The Cytoplasmic segment spans residues 1367–1375 (ACDPNRKRG). Residues 1376–1396 (WPATEVMTAVGLMFAIVGGLA) form a helical membrane-spanning segment. Residues 1397-1399 (ELD) are Lumenal-facing. Residues 1400-1420 (IDSMAIPMTIAGLMFAAFVIS) form a helical membrane-spanning segment. Residues 1421–1477 (GKSTDMWIERTADISWEGDAEITGSSERVDVRLDDDGNFQLMNDPGAPWKIWMLRMA) are Cytoplasmic-facing. The interacts with and activates NS3 protease stretch occupies residues 1428-1467 (IERTADISWEGDAEITGSSERVDVRLDDDGNFQLMNDPGA). An intramembrane region (helical) is located at residues 1478–1498 (CLAISAYTPWAILPSVVGFWI). At 1499-2174 (TLQYTKRGGV…RMALEELPDA (676 aa)) the chain is on the cytoplasmic side. Residues 1506–1683 (GGVLWDTPSP…ERMDEPVPAG (178 aa)) form the Peptidase S7 domain. Residues His-1556, Asp-1580, and Ser-1640 each act as charge relay system; for serine protease NS3 activity in the active site. Residues 1686-1842 (PEMLRKKQIT…ESNAPISDLQ (157 aa)) form the Helicase ATP-binding domain. The segment at 1690-1693 (RKKQ) is important for RNA-binding. 1699–1706 (LHPGAGKT) provides a ligand contact to ATP. A DEAH box motif is present at residues 1790–1793 (DEAH). The Helicase C-terminal domain occupies 1853–2018 (GYEWITEYIG…GLIAQFYQPE (166 aa)). Lys-1894 carries the N6-acetyllysine; by host modification. The segment at 2169-2173 (EELPD) is regulates the ATPase activity of NS3 helicase. Residues 2175–2195 (LQTIALIALLSVMTMGVFFLL) traverse the membrane as a helical segment. At 2196-2200 (MQRKG) the chain is on the lumenal side. Residues 2201 to 2221 (IGKIGLGGVVLGAATFFCWMA) constitute an intramembrane region (helical). Position 2222 (Glu-2222) is a topological domain, lumenal. A helical transmembrane segment spans residues 2223 to 2243 (VPGTKIAGMLLLSLLLMIVLI). Over 2244–2258 (PEPEKQRSQTDNQLA) the chain is Cytoplasmic. The helical transmembrane segment at 2259–2273 (VFLICVLTLVGAVAA) threads the bilayer. Topologically, residues 2274-2312 (NEMGWLDKTKSDISGLFGQRIETKENFSIGEFLLDLRPA) are lumenal. Residues 2313-2333 (TAWSLYAVTTAVLTPLLKHLI) constitute an intramembrane region (helical). The Lumenal segment spans residues 2334-2380 (TSDYITTSLTSINVQASALFTLARGFPFVDVGVSALLLAAGCWGQVT). A helical membrane pass occupies residues 2381–2401 (LTVTVTSATLLFCHYAYMVPG). The Cytoplasmic portion of the chain corresponds to 2402–2444 (WQAEAMRSAQRRTAAGIMKNAVVDGIVATDVPELERTTPIMQK). Residues 2445–2465 (KVGQVMLILVSLAALVVNPSV) traverse the membrane as a helical segment. The Lumenal segment spans residues 2466-2470 (KTVRE). A helical transmembrane segment spans residues 2471–2491 (AGILITAAAVTLWENGASSVW). At 2492 to 3433 (NATTAIGLCH…DTTLVEDTVL (942 aa)) the chain is on the cytoplasmic side. An mRNA cap 0-1 NS5-type MT domain is found at 2529 to 2794 (GGAKGRTLGE…DVNLGSGTRA (266 aa)). Position 2584 (Ser-2584) interacts with S-adenosyl-L-methionine. The residue at position 2584 (Ser-2584) is a Phosphoserine. Lys-2589 (for 2'-O-MTase activity) is an active-site residue. The S-adenosyl-L-methionine site is built by Gly-2614, Trp-2615, Thr-2632, Lys-2633, Asp-2659, and Val-2660. The active-site For 2'-O-MTase activity is the Asp-2674. Ile-2675 lines the S-adenosyl-L-methionine pocket. Catalysis depends on for 2'-O-MTase activity residues Lys-2710 and Glu-2746. Tyr-2748 lines the S-adenosyl-L-methionine pocket. The Nuclear localization signal motif lies at 2917–2919 (REK). 4 residues coordinate Zn(2+): Glu-2968, His-2972, Cys-2977, and Cys-2980. Residues 3058-3210 (GRIYADDTAG…KPLDDRFATS (153 aa)) enclose the RdRp catalytic domain. Residues His-3245, Cys-3261, and Cys-3380 each contribute to the Zn(2+) site. The short motif at 3431–3433 (TVL) is the PDZ-binding element.

In the N-terminal section; belongs to the class I-like SAM-binding methyltransferase superfamily. mRNA cap 0-1 NS5-type methyltransferase family. As to quaternary structure, homodimer; further assembles as a homotetramer. Interacts (via N-terminus) with host EXOC1 (via C-terminus); this interaction results in EXOC1 degradation through the proteasome degradation pathway. Forms heterodimers with envelope protein E in the endoplasmic reticulum and Golgi. In terms of assembly, homodimer; in the endoplasmic reticulum and Golgi. Interacts with protein prM. Interacts with non-structural protein 1. As to quaternary structure, homodimer; Homohexamer when secreted. Interacts with envelope protein E. NS1 interacts with NS4B. Interacts with host complement protein CFH; this interaction leads to the degradation of C3. Interacts (via N-terminus) with serine protease NS3. In terms of assembly, forms a heterodimer with serine protease NS3. May form homooligomers. As to quaternary structure, forms a heterodimer with NS2B. Interacts with non-structural protein 2A (via N-terminus). Interacts with NS4B. Interacts with unphosphorylated RNA-directed RNA polymerase NS5; this interaction stimulates RNA-directed RNA polymerase NS5 guanylyltransferase activity. Interacts with Serine protease/Helicase NS3. Interacts with NS1. In terms of assembly, homodimer. Interacts with host STAT2; this interaction inhibits the phosphorylation of the latter, and, when all viral proteins are present (polyprotein), targets STAT2 for degradation. Interacts with serine protease NS3. In terms of processing, specific enzymatic cleavages in vivo yield mature proteins. Cleavages in the lumen of endoplasmic reticulum are performed by host signal peptidase, whereas cleavages in the cytoplasmic side are performed by serine protease NS3. Signal cleavage at the 2K-4B site requires a prior NS3 protease-mediated cleavage at the 4A-2K site. Cleaved in post-Golgi vesicles by a host furin, releasing the mature small envelope protein M, and peptide pr. This cleavage is incomplete as up to 30% of viral particles still carry uncleaved prM. Post-translationally, N-glycosylated. In terms of processing, N-glycosylated. The excreted form is glycosylated and this is required for efficient secretion of the protein from infected cells. Acetylated by host KAT5. Acetylation modulates NS3 RNA-binding and unwinding activities and plays an important positive role for viral replication. Post-translationally, phosphorylated on serines residues. This phosphorylation may trigger NS5 nuclear localization.

The protein resides in the virion. The protein localises to the host nucleus. It localises to the host cytoplasm. Its subcellular location is the host perinuclear region. It is found in the secreted. The protein resides in the virion membrane. The protein localises to the host endoplasmic reticulum membrane. It carries out the reaction Selective hydrolysis of -Xaa-Xaa-|-Yaa- bonds in which each of the Xaa can be either Arg or Lys and Yaa can be either Ser or Ala.. The enzyme catalyses RNA(n) + a ribonucleoside 5'-triphosphate = RNA(n+1) + diphosphate. It catalyses the reaction a ribonucleoside 5'-triphosphate + H2O = a ribonucleoside 5'-diphosphate + phosphate + H(+). The catalysed reaction is ATP + H2O = ADP + phosphate + H(+). It carries out the reaction a 5'-end (5'-triphosphoguanosine)-ribonucleoside in mRNA + S-adenosyl-L-methionine = a 5'-end (N(7)-methyl 5'-triphosphoguanosine)-ribonucleoside in mRNA + S-adenosyl-L-homocysteine. The enzyme catalyses a 5'-end (N(7)-methyl 5'-triphosphoguanosine)-ribonucleoside in mRNA + S-adenosyl-L-methionine = a 5'-end (N(7)-methyl 5'-triphosphoguanosine)-(2'-O-methyl-ribonucleoside) in mRNA + S-adenosyl-L-homocysteine + H(+). In terms of biological role, plays a role in virus budding by binding to the cell membrane and gathering the viral RNA into a nucleocapsid that forms the core of a mature virus particle. During virus entry, may induce genome penetration into the host cytoplasm after hemifusion induced by the surface proteins. Can migrate to the cell nucleus where it modulates host functions. Overcomes the anti-viral effects of host EXOC1 by sequestering and degrading the latter through the proteasome degradation pathway. Functionally, inhibits RNA silencing by interfering with host Dicer. Prevents premature fusion activity of envelope proteins in trans-Golgi by binding to envelope protein E at pH6.0. After virion release in extracellular space, gets dissociated from E dimers. Its function is as follows. Acts as a chaperone for envelope protein E during intracellular virion assembly by masking and inactivating envelope protein E fusion peptide. prM is the only viral peptide matured by host furin in the trans-Golgi network probably to avoid catastrophic activation of the viral fusion activity in acidic Golgi compartment prior to virion release. prM-E cleavage is inefficient, and many virions are only partially matured. These uncleaved prM would play a role in immune evasion. In terms of biological role, may play a role in virus budding. Exerts cytotoxic effects by activating a mitochondrial apoptotic pathway through M ectodomain. May display a viroporin activity. Functionally, binds to host cell surface receptor and mediates fusion between viral and cellular membranes. Envelope protein is synthesized in the endoplasmic reticulum in the form of heterodimer with protein prM. They play a role in virion budding in the ER, and the newly formed immature particle is covered with 60 spikes composed of heterodimer between precursor prM and envelope protein E. The virion is transported to the Golgi apparatus where the low pH causes dissociation of PrM-E heterodimers and formation of E homodimers. prM-E cleavage is inefficient, and many virions are only partially matured. These uncleaved prM would play a role in immune evasion. Involved in immune evasion, pathogenesis and viral replication. Once cleaved off the polyprotein, is targeted to three destinations: the viral replication cycle, the plasma membrane and the extracellular compartment. Essential for viral replication. Required for formation of the replication complex and recruitment of other non-structural proteins to the ER-derived membrane structures. Excreted as a hexameric lipoparticle that plays a role against host immune response. Antagonizing the complement function. Binds to the host macrophages and dendritic cells. Inhibits signal transduction originating from Toll-like receptor 3 (TLR3). Its function is as follows. Component of the viral RNA replication complex that functions in virion assembly and antagonizes the host alpha/beta interferon antiviral response. Inhibits STAT2 translocation in the nucleus after IFN-alpha treatment. In terms of biological role, required cofactor for the serine protease function of NS3. May have membrane-destabilizing activity and form viroporins. Inhibits STAT2 translocation in the nucleus after IFN-alpha treatment. Functionally, displays three enzymatic activities: serine protease, NTPase and RNA helicase. NS3 serine protease, in association with NS2B, performs its autocleavage and cleaves the polyprotein at dibasic sites in the cytoplasm: C-prM, NS2A-NS2B, NS2B-NS3, NS3-NS4A, NS4A-2K and NS4B-NS5. NS3 RNA helicase binds RNA and unwinds dsRNA in the 3' to 5' direction. NS3 supports the separation of RNA daughter and template strands during viral replication. The helicase part is involved in the inhibition of phosphorylation of host STAT1, and thereby inhibition of host type-I IFN signaling. In addition, NS3 assists the initiation of replication by unwinding the RNA secondary structure in the 3' non-translated region (NTR). Inhibits STAT2 translocation in the nucleus after IFN-alpha treatment. Regulates the ATPase activity of the NS3 helicase activity. NS4A allows NS3 helicase to conserve energy during unwinding. Induces host ER membrane rearrangements to provide a compartment where viral replication can take part. Inhibits STAT2 translocation in the nucleus after IFN-alpha treatment. Its function is as follows. Functions as a signal peptide for NS4B and is required for the interferon antagonism activity of the latter. In terms of biological role, induces the formation of ER-derived membrane vesicles where the viral replication takes place. Inhibits interferon (IFN)-induced host STAT1 phosphorylation and nuclear translocation, thereby preventing the establishment of cellular antiviral state by blocking the IFN-alpha/beta pathway. Inhibits STAT2 translocation in the nucleus after IFN-alpha treatment. Functionally, replicates the viral (+) and (-) genome, and performs the capping of genomes in the cytoplasm. NS5 methylates viral RNA cap at guanine N-7 and ribose 2'-O positions. Besides its role in genome replication, also prevents the establishment of cellular antiviral state by blocking the interferon-alpha/beta (IFN-alpha/beta) signaling pathway. Inhibits host JAK1 and TYK2 phosphorylation, thereby preventing activation of JAK-STAT signaling pathway. May transcriptionally regulate host genes involved in antiviral response when localized in the nucleus. This Ciconiiformes (storks and others) protein is Genome polyprotein.